The sequence spans 339 residues: MRKKLEQIKENAFKELQDKRKDLDIESIRIKYLGKKGELTHILRGMKELSKEERPIIGKLANDIRTALENAIEEASQRIKSSERESRVKGETIDITMPGIKQNIGRRHPLEQVLEDMKEIFVSMGFTIEEGPEVELDYYNFEALNIPKNHPARGEQDTFYINDNLVLRTQTSPTQIRTMEKQKPPIKMISPGKVYRSDSVDATHSPIFYQMEGLVVDKGITFADLKGTLELFARKMFGDEMKTKFRPHHFPFTEPSAEMDATCFVCNGEGCRVCKGEGWIELLGCGMVHPQVLRNCNIDPEVYSGFAFGMGVDRMVMLKYGIDDIRNMYESDMRFLNQF.

Glutamate 254 contributes to the Mg(2+) binding site.

This sequence belongs to the class-II aminoacyl-tRNA synthetase family. Phe-tRNA synthetase alpha subunit type 1 subfamily. In terms of assembly, tetramer of two alpha and two beta subunits. It depends on Mg(2+) as a cofactor.

It is found in the cytoplasm. The catalysed reaction is tRNA(Phe) + L-phenylalanine + ATP = L-phenylalanyl-tRNA(Phe) + AMP + diphosphate + H(+). This Clostridium kluyveri (strain ATCC 8527 / DSM 555 / NBRC 12016 / NCIMB 10680 / K1) protein is Phenylalanine--tRNA ligase alpha subunit.